The sequence spans 196 residues: Small ribosomal subunit protein uS4c (196 aa).

Residues 22–42 form a disordered region; sequence TRKTPKSGSNPKKKFHSGKKE. One can recognise an S4 RNA-binding domain in the interval 89-169; the sequence is MRLDNILFRL…LPKHLTIDTL (81 aa).

It belongs to the universal ribosomal protein uS4 family. As to quaternary structure, part of the 30S ribosomal subunit. Contacts protein S5. The interaction surface between S4 and S5 is involved in control of translational fidelity.

The protein resides in the plastid. It is found in the chloroplast. Functionally, one of the primary rRNA binding proteins, it binds directly to 16S rRNA where it nucleates assembly of the body of the 30S subunit. With S5 and S12 plays an important role in translational accuracy. The sequence is that of Small ribosomal subunit protein uS4c (rps4) from Melica altissima (Siberian melic grass).